The chain runs to 311 residues: Vomeronasal type-1 receptor 3 (311 aa).

Residues 1-5 (MASKD) lie on the Extracellular side of the membrane. Residues 6 to 26 (FAIGMILLSQIMVGFLGNFFL) traverse the membrane as a helical segment. The Cytoplasmic portion of the chain corresponds to 27 to 51 (LYHYSFLCFTRGMLQSTDLILKHLT). A helical transmembrane segment spans residues 52 to 72 (IANSLVILSKGIPQTMAAFGL). Residues 73 to 92 (KDSLSDIGCKFVFYVHRVGR) lie on the Extracellular side of the membrane. The chain crosses the membrane as a helical span at residues 93-113 (AVCVGNACLLSVFQVITISPS). Residues 114 to 130 (EFRWAELKLHAHKYIRS) are Cytoplasmic-facing. A helical membrane pass occupies residues 131–151 (FILVLCWILNTLVNITVLLHV). Over 152-187 (TGKWNSINSTKTNDYGYCSGGSRSRIPHSLHIVLLS) the chain is Extracellular. N159 carries an N-linked (GlcNAc...) asparagine glycan. The helical transmembrane segment at 188 to 208 (SLDVLCLGLMTLASGSMVFIL) threads the bilayer. Residues 209–232 (HRHKQQVQHIHGTNLSARSSPESR) lie on the Cytoplasmic side of the membrane. Residues 233-249 (VTQSILVLVSTLCYFTR) traverse the membrane as a helical segment. Over 250-264 (SPPSLHMSLFPNPSW) the chain is Extracellular. A helical transmembrane segment spans residues 265 to 285 (WLLNTSALITACFPMVSPFVL). Over 286 to 311 (MSRHPRIPRLGSACCGRNPQFPKLVR) the chain is Cytoplasmic.

Belongs to the G-protein coupled receptor 1 family.

The protein resides in the cell membrane. Putative pheromone receptor. This Homo sapiens (Human) protein is Vomeronasal type-1 receptor 3 (VN1R3).